Reading from the N-terminus, the 1512-residue chain is DNA (cytosine-5)-methyltransferase 2 (1512 aa).

Over residues 1–22 (METKVGKQKKRSVDSNDDVSKE) the composition is skewed to basic and acidic residues. Disordered regions lie at residues 1-35 (METK…RNFK) and 634-678 (AIHE…GNSE). The segment covering 638–662 (VEEEEIEEDEEEDENEEDDIEEEAV) has biased composition (acidic residues). 2 consecutive BAH domains span residues 707–841 (ETVA…FSLP) and 909–1026 (TTLK…KQFP). The region spanning 1071-1505 (LATLDIFAGC…RKLKEALYLK (435 aa)) is the SAM-dependent MTase C5-type domain. Cys1176 is an active-site residue.

It belongs to the class I-like SAM-binding methyltransferase superfamily. C5-methyltransferase family. In terms of tissue distribution, expressed at low levels in vegetative and floral organs.

It localises to the nucleus. It carries out the reaction a 2'-deoxycytidine in DNA + S-adenosyl-L-methionine = a 5-methyl-2'-deoxycytidine in DNA + S-adenosyl-L-homocysteine + H(+). Functionally, maintains chromatin CpG methylation that plays a role in genomic imprinting, regulation of embryogenesis and seed viability. Required for proper patterns of CG DNA methylation in dividing cells. The polypeptide is DNA (cytosine-5)-methyltransferase 2 (MET2) (Arabidopsis thaliana (Mouse-ear cress)).